The chain runs to 533 residues: Metal transporter nramp1 homolog (533 aa).

The disordered stretch occupies residues 1–33 (MTPRIESEESAPLVNKNNNNNNDNNNNNNVDEE). Topologically, residues 1-68 (MTPRIESEES…PNIDKPDSKW (68 aa)) are cytoplasmic. Over residues 14–29 (VNKNNNNNNDNNNNNN) the composition is skewed to low complexity. The chain crosses the membrane as a helical span at residues 69-89 (INFKTLWAFTGPGFLMSIAYL). Residues 90-101 (DPGNLESDIQAG) lie on the Extracellular side of the membrane. Residues 102-122 (AMAGYQLLWVLFWSTVIGFWL) traverse the membrane as a helical segment. The Cytoplasmic portion of the chain corresponds to 123–158 (QMLASRLGVVTGKHLAEHCREQYPKTPRLLLWLMTE). A helical membrane pass occupies residues 159–179 (LAIIGSDIQEVIGTAIALQIL). Over 180–182 (SNG) the chain is Extracellular. The helical transmembrane segment at 183–203 (HIPLWAGVLFTAADTFTFLFL) threads the bilayer. Topologically, residues 204 to 212 (EKYGIRKLE) are cytoplasmic. Residues 213–233 (AFFCSLIAIMAISFGVEYIIS) traverse the membrane as a helical segment. Topologically, residues 234-256 (KPDQIEVVKGVFIPLCSQNNISQ) are extracellular. Residue Asn253 is glycosylated (N-linked (GlcNAc...) asparagine). A helical membrane pass occupies residues 257–277 (AVGILGAVVMPHNIYLHSALV). Residues 278–302 (QSREIDRKSETQVKIANKYNRLESA) lie on the Cytoplasmic side of the membrane. The chain crosses the membrane as a helical span at residues 303–323 (FALIISFIINLLLVSVFAKGF). Residues 324 to 348 (YGETTEIGLSSAADFLMDKYGKVAK) are Extracellular-facing. The helical transmembrane segment at 349–368 (YIWAIGLFSAGQCSTMTGTY) threads the bilayer. Residues 369–387 (SGQFVMEGFLKLKIAPWKR) lie on the Cytoplasmic side of the membrane. A helical transmembrane segment spans residues 388-408 (LLITRCTAIVPAMVVAILSTS). Residues 409 to 415 (HLDSLDQ) are Extracellular-facing. A helical transmembrane segment spans residues 416-436 (WLNILQSIQLPFAVVPVLLFT). Residues 437–457 (SSEKIMGSKFKNHWLNNQFVR) lie on the Cytoplasmic side of the membrane. Residues 458–478 (FLSLLIIAINIYLIITFSMQI) form a helical membrane-spanning segment. At 479 to 481 (SES) the chain is on the extracellular side. A helical transmembrane segment spans residues 482–502 (AWMISIVSISFFFYFIFIVYL). Topologically, residues 503-533 (SMGQENFNSMTKKIKNLFNNNSNQTYNNINY) are cytoplasmic.

The protein belongs to the NRAMP family.

It localises to the membrane. Its function is as follows. Depletes iron from the phagolysosome in an ATP-dependent process. May rather act as a symporter of protons and metal cations in an ATP-dependent process. Nramp1 overexpression protected cells from L.pneumophila infection. The polypeptide is Metal transporter nramp1 homolog (nramp1) (Dictyostelium discoideum (Social amoeba)).